The chain runs to 444 residues: MLDNFIVNQATKEFSVSEISNKIKELLENNFGYIKIKGEISGFKIASSGHAYFNLKENTAILACTCWRPTLAKIKFPLKDGMEVVISGKLSSYAGNSRYQLAVDNLQPAGLGTMLQILNERKTRLEKEGLFNKRRIPIPFLPTRIGVITSITGAVIKDIIHRIRERFPTHIIIWPVSVQGENSGNEIAAAIEGFNKLEEANKPSVIIVARGGGSIEDLWSFNDEILVRAAYNSKIPIISAVGHEVDYTLIDLAADKRAPTPTAAAEFAVPVRSILNNTLQSYEKVLLNNTKQLINYHEQNIANYDKIHRYLTNYINHRQQLLDETGFNLLDVLPCFIELQETKLKFCSKERINPAKIINYKTLELTHQTAYLSKSANNTLKNFEYKLELNSTLLASLDYHNVLKRGFAIVKGAMGNFLSSKITAADEKIFNIKFSDGEIKVVRN.

This sequence belongs to the XseA family. As to quaternary structure, heterooligomer composed of large and small subunits.

Its subcellular location is the cytoplasm. The enzyme catalyses Exonucleolytic cleavage in either 5'- to 3'- or 3'- to 5'-direction to yield nucleoside 5'-phosphates.. Bidirectionally degrades single-stranded DNA into large acid-insoluble oligonucleotides, which are then degraded further into small acid-soluble oligonucleotides. The sequence is that of Exodeoxyribonuclease 7 large subunit from Rickettsia canadensis (strain McKiel).